A 266-amino-acid chain; its full sequence is Putative carbamate hydrolase RutD (266 aa).

One can recognise an AB hydrolase-1 domain in the interval 14 to 115 (PVVVLISGLG…TVLVSVNGWL (102 aa)).

Belongs to the AB hydrolase superfamily. Hydrolase RutD family.

It catalyses the reaction carbamate + 2 H(+) = NH4(+) + CO2. Its function is as follows. Involved in pyrimidine catabolism. May facilitate the hydrolysis of carbamate, a reaction that can also occur spontaneously. This is Putative carbamate hydrolase RutD from Escherichia coli O9:H4 (strain HS).